We begin with the raw amino-acid sequence, 183 residues long: Acireductone dioxygenase (183 aa).

Positions 1 to 21 (MVQAWYMDSDTTTDQREEHQL) are disordered. Fe(2+) contacts are provided by histidine 90, histidine 92, glutamate 96, and histidine 135. Residues histidine 90, histidine 92, glutamate 96, and histidine 135 each coordinate Ni(2+).

The protein belongs to the acireductone dioxygenase (ARD) family. Fe(2+) serves as cofactor. Ni(2+) is required as a cofactor.

Its subcellular location is the cytoplasm. The protein localises to the nucleus. It carries out the reaction 1,2-dihydroxy-5-(methylsulfanyl)pent-1-en-3-one + O2 = 4-methylsulfanyl-2-oxobutanoate + formate + 2 H(+). The enzyme catalyses 1,2-dihydroxy-5-(methylsulfanyl)pent-1-en-3-one + O2 = 3-(methylsulfanyl)propanoate + CO + formate + 2 H(+). It functions in the pathway amino-acid biosynthesis; L-methionine biosynthesis via salvage pathway; L-methionine from S-methyl-5-thio-alpha-D-ribose 1-phosphate: step 5/6. In terms of biological role, catalyzes 2 different reactions between oxygen and the acireductone 1,2-dihydroxy-3-keto-5-methylthiopentene (DHK-MTPene) depending upon the metal bound in the active site. Fe-containing acireductone dioxygenase (Fe-ARD) produces formate and 2-keto-4-methylthiobutyrate (KMTB), the alpha-ketoacid precursor of methionine in the methionine recycle pathway. Ni-containing acireductone dioxygenase (Ni-ARD) produces methylthiopropionate, carbon monoxide and formate, and does not lie on the methionine recycle pathway. In Ixodes scapularis (Black-legged tick), this protein is Acireductone dioxygenase.